Consider the following 441-residue polypeptide: UDP-N-acetylmuramoylalanine--D-glutamate ligase (441 aa).

112–118 is an ATP binding site; that stretch reads GTNGKTT.

It belongs to the MurCDEF family.

Its subcellular location is the cytoplasm. The enzyme catalyses UDP-N-acetyl-alpha-D-muramoyl-L-alanine + D-glutamate + ATP = UDP-N-acetyl-alpha-D-muramoyl-L-alanyl-D-glutamate + ADP + phosphate + H(+). Its pathway is cell wall biogenesis; peptidoglycan biosynthesis. Functionally, cell wall formation. Catalyzes the addition of glutamate to the nucleotide precursor UDP-N-acetylmuramoyl-L-alanine (UMA). The protein is UDP-N-acetylmuramoylalanine--D-glutamate ligase of Gloeobacter violaceus (strain ATCC 29082 / PCC 7421).